A 549-amino-acid polypeptide reads, in one-letter code: Teichoic acids export ATP-binding protein TagH (549 aa).

The ABC transporter domain occupies 22–243; the sequence is DKLKDLFFRS…YDEFLKKYNQ (222 aa). ATP is bound at residue 57 to 64; it reads GLNGSGKS. Positions 244–549 are unknown; it reads MSVEERKDLR…EIQSISIVKK (306 aa). The SH3b domain maps to 346-415; sequence AAKYIVNSNG…ISTKFIEPFK (70 aa).

It belongs to the ABC transporter superfamily. Teichoic acids exporter (TC 3.A.1.104.1) family. The complex is composed of two ATP-binding proteins (TagH) and two transmembrane proteins (TagG).

Its subcellular location is the cell membrane. It catalyses the reaction ATP + H2O + teichoic acidSide 1 = ADP + phosphate + teichoic acidSide 2.. In terms of biological role, part of the ABC transporter complex TagGH involved in teichoic acids export. Responsible for energy coupling to the transport system. This chain is Teichoic acids export ATP-binding protein TagH, found in Bacillus anthracis.